The chain runs to 130 residues: Anti-adapter protein IraD (130 aa).

The protein belongs to the GpW/Gp25 family. IraD subfamily. As to quaternary structure, interacts with RssB.

The protein resides in the cytoplasm. Inhibits RpoS proteolysis by regulating RssB activity, thereby increasing the stability of the sigma stress factor RpoS during oxidative stress. Its effect on RpoS stability is due to its interaction with RssB, which probably blocks the interaction of RssB with RpoS, and the consequent delivery of the RssB-RpoS complex to the ClpXP protein degradation pathway. In Shigella boydii serotype 4 (strain Sb227), this protein is Anti-adapter protein IraD.